A 438-amino-acid chain; its full sequence is ATP-dependent RNA helicase RhlB (438 aa).

Positions 9-37 (QRFADLPLHPEVKQALAENGFEFCTPIQA) match the Q motif motif. The 180-residue stretch at 40-219 (LPVLLQSKDI…YDHMNEPVKV (180 aa)) folds into the Helicase ATP-binding domain. 53 to 60 (AQTGTGKT) contacts ATP. Residues 165 to 168 (DEAD) carry the DEAD box motif. The Helicase C-terminal domain occupies 243–390 (KMRLLLTLIE…VSNYDSEALL (148 aa)). Residues 395–438 (TPAKIHRKHPSGTRNLRDRSGASRPGAQRSGARPPRHDRTRRHS) form a disordered region. Residues 428 to 438 (PPRHDRTRRHS) show a composition bias toward basic residues.

Belongs to the DEAD box helicase family. RhlB subfamily. Component of the RNA degradosome, which is a multiprotein complex involved in RNA processing and mRNA degradation.

The protein resides in the cytoplasm. The enzyme catalyses ATP + H2O = ADP + phosphate + H(+). DEAD-box RNA helicase involved in RNA degradation. Has RNA-dependent ATPase activity and unwinds double-stranded RNA. This is ATP-dependent RNA helicase RhlB from Shewanella baltica (strain OS185).